The chain runs to 216 residues: Small ribosomal subunit protein uS3c (216 aa).

Residues 39-109 form the KH type-2 domain; that stretch reads IRSYINRELE…SIRINVIELT (71 aa).

Belongs to the universal ribosomal protein uS3 family. In terms of assembly, part of the 30S ribosomal subunit.

It is found in the plastid. The protein localises to the chloroplast. This Guillardia theta (Cryptophyte) protein is Small ribosomal subunit protein uS3c (rps3).